We begin with the raw amino-acid sequence, 82 residues long: Small ribosomal subunit protein bS16 (82 aa).

It belongs to the bacterial ribosomal protein bS16 family.

In Methylobacillus flagellatus (strain ATCC 51484 / DSM 6875 / VKM B-1610 / KT), this protein is Small ribosomal subunit protein bS16.